A 130-amino-acid chain; its full sequence is MAENQYYGTGRRKSSAARVFIKPGNGKIVINQRSLEQYFGRETARMVVRQPMELVDMVEKLDLYITVKGGGISGQAGAIRHGITRALMEYDESLRSELRKAGFVTRDARQVERKKVGLRKARRRPQFSKR.

The protein belongs to the universal ribosomal protein uS9 family.

This chain is Small ribosomal subunit protein uS9 (rpsI), found in Shigella flexneri.